Reading from the N-terminus, the 465-residue chain is Siroheme synthase (465 aa).

The precorrin-2 dehydrogenase /sirohydrochlorin ferrochelatase stretch occupies residues methionine 1–leucine 203. Residues glutamate 22–valine 23 and proline 43–glutamine 44 each bind NAD(+). At serine 128 the chain carries Phosphoserine. Positions glycine 217–alanine 465 are uroporphyrinogen-III C-methyltransferase. Residue proline 226 coordinates S-adenosyl-L-methionine. Aspartate 249 (proton acceptor) is an active-site residue. The active-site Proton donor is lysine 271. S-adenosyl-L-methionine-binding positions include glycine 302 to aspartate 304, isoleucine 307, threonine 332 to alanine 333, methionine 384, and glycine 413.

In the N-terminal section; belongs to the precorrin-2 dehydrogenase / sirohydrochlorin ferrochelatase family. It in the C-terminal section; belongs to the precorrin methyltransferase family.

It carries out the reaction uroporphyrinogen III + 2 S-adenosyl-L-methionine = precorrin-2 + 2 S-adenosyl-L-homocysteine + H(+). It catalyses the reaction precorrin-2 + NAD(+) = sirohydrochlorin + NADH + 2 H(+). The enzyme catalyses siroheme + 2 H(+) = sirohydrochlorin + Fe(2+). It functions in the pathway cofactor biosynthesis; adenosylcobalamin biosynthesis; precorrin-2 from uroporphyrinogen III: step 1/1. Its pathway is cofactor biosynthesis; adenosylcobalamin biosynthesis; sirohydrochlorin from precorrin-2: step 1/1. It participates in porphyrin-containing compound metabolism; siroheme biosynthesis; precorrin-2 from uroporphyrinogen III: step 1/1. The protein operates within porphyrin-containing compound metabolism; siroheme biosynthesis; siroheme from sirohydrochlorin: step 1/1. It functions in the pathway porphyrin-containing compound metabolism; siroheme biosynthesis; sirohydrochlorin from precorrin-2: step 1/1. Its function is as follows. Multifunctional enzyme that catalyzes the SAM-dependent methylations of uroporphyrinogen III at position C-2 and C-7 to form precorrin-2 via precorrin-1. Then it catalyzes the NAD-dependent ring dehydrogenation of precorrin-2 to yield sirohydrochlorin. Finally, it catalyzes the ferrochelation of sirohydrochlorin to yield siroheme. The chain is Siroheme synthase from Pseudomonas paraeruginosa (strain DSM 24068 / PA7) (Pseudomonas aeruginosa (strain PA7)).